The primary structure comprises 514 residues: 2,3-bisphosphoglycerate-independent phosphoglycerate mutase (514 aa).

Mn(2+)-binding residues include Asp-14 and Ser-64. Ser-64 acts as the Phosphoserine intermediate in catalysis. Substrate-binding positions include His-125, 155–156 (RD), Arg-187, Arg-193, 263–266 (RADR), and Lys-336. Residues Asp-403, His-407, Asp-444, His-445, and His-463 each contribute to the Mn(2+) site.

This sequence belongs to the BPG-independent phosphoglycerate mutase family. Monomer. Mn(2+) serves as cofactor.

The enzyme catalyses (2R)-2-phosphoglycerate = (2R)-3-phosphoglycerate. The protein operates within carbohydrate degradation; glycolysis; pyruvate from D-glyceraldehyde 3-phosphate: step 3/5. In terms of biological role, catalyzes the interconversion of 2-phosphoglycerate and 3-phosphoglycerate. This is 2,3-bisphosphoglycerate-independent phosphoglycerate mutase from Enterobacter sp. (strain 638).